The sequence spans 218 residues: MGNITAKLVKDLRDKTGAGMMDCKKALNETDGNVDKALEWLRKKGIASAEKKSGRIAAEGSIGSYIHTGSRVGVLLELNCETDFVARGDIFQSLLKDVSMQVAACPNVEYVSIDEIPEDVVEKEKQIEMGRDDLSGKPEQIKEKIVEGRIAKRLNELVLLSQPYIKDSSLTVEDLVKQAAAKIGENIKVRRFTRYTLGEGIEKNQMDFAEEVASMKSN.

Positions 82–85 are involved in Mg(2+) ion dislocation from EF-Tu; it reads TDFV.

This sequence belongs to the EF-Ts family.

The protein localises to the cytoplasm. Functionally, associates with the EF-Tu.GDP complex and induces the exchange of GDP to GTP. It remains bound to the aminoacyl-tRNA.EF-Tu.GTP complex up to the GTP hydrolysis stage on the ribosome. This Prochlorococcus marinus (strain MIT 9312) protein is Elongation factor Ts.